Here is a 747-residue protein sequence, read N- to C-terminus: Flowering time control protein FCA (747 aa).

The tract at residues 80–101 is disordered; it reads YSVRPTTPPVQQPLSGQKRGYP. RRM domains follow at residues 120-201 and 211-291; these read VKLF…YADG and FKLF…FAEP. Residues 291–301 are compositionally biased toward basic and acidic residues; the sequence is PKRPKPGESRE. Residues 291–503 are disordered; sequence PKRPKPGESR…QQPLQKMQHP (213 aa). Polar residues-rich tracts occupy residues 320-353 and 395-406; these read RPTS…SNTG and SSSATLQQQNRA. The segment covering 448-460 has biased composition (low complexity); the sequence is SSQLPTSQLPPQQ. Polar residues predominate over residues 461–498; that stretch reads NISRATAPQTPLNINLRPTTVSSATVQFPPRSQQQPLQ. The WW domain occupies 591-624; that stretch reads GSVKCTWTEHTSPDGFKYYYNGLTGESKWEKPEE. Residues 630–641 are compositionally biased toward basic and acidic residues; that stretch reads REQQKQQQHQEK. 2 disordered regions span residues 630–707 and 722–747; these read REQQ…SGIG and AASM…KNKA. A compositionally biased stretch (low complexity) spans 642–673; it reads PTIQQSQTQLQPLQQQPQQVQQQYQGQQLQQP. Polar residues-rich tracts occupy residues 674-707 and 726-739; these read FYSS…SGIG and NDIS…QSPQ.

In terms of assembly, interacts (via C-terminus) with SWI3B and (via WW domain) with FY (via PPLPP motifs). Constitutively expressed, but the negative feedback maintains the active isoform a low level throughout much of the plant, except in meristematic cells at a specific time in development.

It localises to the nucleus. Functionally, plays a major role in the promotion of the transition of the vegetative meristem to reproductive development. Plays a role in the regulation of flowering time in the autonomous flowering pathway by decreasing FLOWERING LOCUS C mRNA levels. Required for RNA-mediated chromatin silencing of a range of loci in the genome. Cotranscriptionally recognizes aberrant RNA and marks it for silencing. Controls alternative cleavage and polyadenylation on pre-mRNAs and antisense RNAs. Acts redundantly with FPA to prevent the expression of distally polyadenylated antisense RNAs at the FLC locus. In Arabidopsis thaliana (Mouse-ear cress), this protein is Flowering time control protein FCA (FCA).